Consider the following 698-residue polypeptide: Probable Xaa-Pro aminopeptidase P (698 aa).

Mn(2+)-binding residues include Asp509, Asp520, Glu604, and Glu618.

This sequence belongs to the peptidase M24B family. It depends on Mn(2+) as a cofactor.

The enzyme catalyses Release of any N-terminal amino acid, including proline, that is linked to proline, even from a dipeptide or tripeptide.. Catalyzes the removal of a penultimate prolyl residue from the N-termini of peptides. This Arthroderma benhamiae (strain ATCC MYA-4681 / CBS 112371) (Trichophyton mentagrophytes) protein is Probable Xaa-Pro aminopeptidase P (AMPP).